The sequence spans 156 residues: Small ribosomal subunit protein uS7 (156 aa).

It belongs to the universal ribosomal protein uS7 family. As to quaternary structure, part of the 30S ribosomal subunit. Contacts proteins S9 and S11.

Functionally, one of the primary rRNA binding proteins, it binds directly to 16S rRNA where it nucleates assembly of the head domain of the 30S subunit. Is located at the subunit interface close to the decoding center, probably blocks exit of the E-site tRNA. This is Small ribosomal subunit protein uS7 from Glaesserella parasuis serovar 5 (strain SH0165) (Haemophilus parasuis).